A 774-amino-acid chain; its full sequence is Armadillo-like helical domain-containing protein 4 (774 aa).

The signal sequence occupies residues 1–27 (MRGPIVLHICLAFCSLLLFSVATQCLA). At 28-714 (FPKIERRREI…KDKAGYMSGM (687 aa)) the chain is on the extracellular side. The span at 41-52 (HAEKGQSDKMNT) shows a compositional bias: basic and acidic residues. Disordered stretches follow at residues 41–63 (HAEKGQSDKMNTDDLENSSVTSK) and 97–135 (QPGQAGLMQTERPGVSTPTESGVPSAEEVFGSSQPERIS). Asn57 is a glycosylation site (N-linked (GlcNAc...) asparagine). A glycan (N-linked (GlcNAc...) asparagine) is linked at Asn189. Over residues 221 to 233 (KTEKFEADTDHRT) the composition is skewed to basic and acidic residues. Disordered stretches follow at residues 221–275 (KTEK…QPLE) and 600–669 (ASYG…PGLE). The segment covering 258–275 (SQMTADNTQAAATKQPLE) has biased composition (polar residues). Residues 607–651 (LESEEGQEDEDEEDEEDEDEEEEDEEEDEEDKDADSLDEGLDGDT) show a composition bias toward acidic residues. Residues 715–735 (LVPVGVGIAGALFILGALYSI) form a helical membrane-spanning segment. At 736–774 (KVMNRRRRNGFKRHKRKQREFNSMQDRVMLLADSSEDEF) the chain is on the cytoplasmic side. Ser769 and Ser770 each carry phosphoserine.

In terms of assembly, interacts with IL6ST; this interaction prevents IL6ST protein homodimerization and bridges ARMH4 with IL6R and STAT3 and therefore inhibits phosphorylation of STAT3 at 'Tyr-705'. Interacts (via cytoplasmic tail) with RICTOR; this interaction bridges ARMH4 to the mTORC2 complex and inhibits the mTORC2 kinase activity. Expressed in podocytes.

Its subcellular location is the membrane. Its function is as follows. May modulate immune response and may play a role in inflammation. Down-modulates STAT3 signaling throught direct interaction with IL6ST, resulting in the inhibition of phosphorylation of STAT3 at 'Tyr-705'. May negatively regulates AKT signaling by modulating the activity of mTORC2 complex through RICTOR interaction. The protein is Armadillo-like helical domain-containing protein 4 of Homo sapiens (Human).